Reading from the N-terminus, the 207-residue chain is Guanylate kinase (207 aa).

Residues 6-185 enclose the Guanylate kinase-like domain; sequence GLLIVLSGPS…AKNRIQCIVE (180 aa). Residue 13–20 participates in ATP binding; that stretch reads GPSGVGKG.

Belongs to the guanylate kinase family.

It is found in the cytoplasm. The catalysed reaction is GMP + ATP = GDP + ADP. Essential for recycling GMP and indirectly, cGMP. The protein is Guanylate kinase of Staphylococcus aureus (strain USA300).